The sequence spans 208 residues: Transmembrane protein 222 (208 aa).

The segment at 1-34 (MAEAEGSSPLLLQPPPPPPRMAEVETPTGAETDM) is disordered. Residues 1–55 (MAEAEGSSPLLLQPPPPPPRMAEVETPTGAETDMKQYHGSGGVVMDVERSRFPYC) are Extracellular-facing. A helical membrane pass occupies residues 56–76 (VVWTPIPVLTWFFPIIGHMGI). At 77 to 164 (CTSAGVIRDF…MRYNNSTNWN (88 aa)) the chain is on the cytoplasmic side. The chain crosses the membrane as a helical span at residues 165–185 (MVTLCCFCLIYGKYVSVGAFV). Position 186 (Lys186) is a topological domain, extracellular. The chain crosses the membrane as a helical span at residues 187 to 207 (TWLPFVLLLGIILTVSLVFNL). Residue Arg208 is a topological domain, cytoplasmic.

Its subcellular location is the membrane. The protein localises to the cell projection. The protein resides in the dendrite. This chain is Transmembrane protein 222 (Tmem222), found in Mus musculus (Mouse).